We begin with the raw amino-acid sequence, 240 residues long: Acetoacetyl-CoA reductase (240 aa).

NADP(+)-binding positions include 18–20 (RGI) and 82–86 (NAGIT). Residues Ser-134 and 141-144 (NVGQ) each bind substrate. The Proton acceptor role is filled by Tyr-147. 177–180 (PGFI) lines the NADP(+) pocket. 178-179 (GF) contributes to the substrate binding site.

It belongs to the short-chain dehydrogenases/reductases (SDR) family.

The catalysed reaction is a (3R)-3-hydroxyacyl-CoA + NADP(+) = a 3-oxoacyl-CoA + NADPH + H(+). It participates in biopolymer metabolism; poly-(R)-3-hydroxybutanoate biosynthesis. Catalyzes the reduction of acetoacetyl-CoA to (R)-3-hydroxybutyryl-CoA. When expressed in E.coli with Synechocystis PhaA, PhaC and PhaE confers the ability to synthesize up to 12% (w/w) poly(3-hydroxybutyrate) (PHB) depending on the carbon source. This chain is Acetoacetyl-CoA reductase, found in Synechocystis sp. (strain ATCC 27184 / PCC 6803 / Kazusa).